A 258-amino-acid chain; its full sequence is Large ribosomal subunit protein uL5c (258 aa).

Residues 1–38 constitute a chloroplast transit peptide; that stretch reads MASTSLLQSTSSSFAGVRFHCRTSAAPRVGLSSFTVKA.

As to quaternary structure, component of the chloroplast large ribosomal subunit (LSU). Mature 70S chloroplast ribosomes of higher plants consist of a small (30S) and a large (50S) subunit. The 30S small subunit contains 1 molecule of ribosomal RNA (16S rRNA) and 24 different proteins. The 50S large subunit contains 3 rRNA molecules (23S, 5S and 4.5S rRNA) and 33 different proteins.

The protein resides in the plastid. It is found in the chloroplast. Functionally, component of the chloroplast ribosome (chloro-ribosome), a dedicated translation machinery responsible for the synthesis of chloroplast genome-encoded proteins, including proteins of the transcription and translation machinery and components of the photosynthetic apparatus. In Spinacia oleracea (Spinach), this protein is Large ribosomal subunit protein uL5c (RPL5).